Reading from the N-terminus, the 760-residue chain is MENNRNFPARQFHSLTFFAGLCIGITPVAQALAAEGQTNADDTLVVEASTPSLYAPQQSADPKFSRPVADTTRTMTVISEQVIKDQGATNLTDALKNVPGVGAFFAGENGNSTTGDAIYMRGADTSNSIYIDGIRDIGSVSRDTFNTEQVEVIKGPSGTDYGRSAPTGSINMISKQPRNDSGIDASASIGSAWFRRGTLDVNQVIGDTTAVRLNVMGEKTHDAGRDKVKNERYGVAPSVAFGLGTANRLYLNYLHVTQHNTPDGGIPTIGLPGYSAPSAGTAALNHSGKVDTHNFYGTDSDYDDSTTDTATMRFEHDINDNTTIRNTTRWSRVKQDYLMTAIMGGASNITQPTSDVNSWTWSRTANTKDVSNKILTNQTNLTSTFYTGSIGHDVSTGVEFTRETQTNYGVNPVTLPAVNIYHPDSSIHPGGLTRNGANANGQTDTFAIYAFDTLQITRDFELNGGIRLDNYHTEYDSATACGGSGRGAITCPTGVAKGSPVTTVDTAKSGNLMNWKAGALYHLTENGNVYINYAVSQQPPGGNNFALAQSGSGNSANRTDFKPQKANTSEIGTKWQVLDKRLLLTAALFRTDIENEVEQNDDGTYSQYGKKRVEGYEISVAGNITPAWQVIGGYTQQKATIKNGKDVAQDGSSSLPYTPEHAFTLWSQYQATDDISVGAGARYIGSMHKGSDGAVGTPAFTEGYWVADAKLGYRVNRNLDFQLNVYNLFDTDYVASINKSGYRYHPGEPRTFLLTANMHF.

A signal peptide spans 1 to 31; sequence MENNRNFPARQFHSLTFFAGLCIGITPVAQA. The 109-residue stretch at 67-175 folds into the TBDR plug domain; sequence PVADTTRTMT…PTGSINMISK (109 aa). The 581-residue stretch at 180–760 folds into the TBDR beta-barrel domain; sequence DSGIDASASI…TFLLTANMHF (581 aa). A TonB C-terminal box motif is present at residues 743 to 760; that stretch reads RYHPGEPRTFLLTANMHF.

The protein belongs to the TonB-dependent receptor family.

It localises to the cell outer membrane. Functionally, involved in the active transport across the outer membrane of iron complexed with catecholate siderophores such as dihydroxybenzoylserine and dihydroxybenzoate. It derives its energy for transport by interacting with the trans-periplasmic membrane protein TonB. Can also transport catechol-substituted cephalosporins. Receptor for microcins M, H47 and E492. This Escherichia coli (strain K12) protein is Catecholate siderophore receptor Fiu (fiu).